Here is a 209-residue protein sequence, read N- to C-terminus: Ribosome maturation factor RimM (209 aa).

Positions 103-178 (EGATYVSDLV…RIEMVLPQGM (76 aa)) constitute a PRC barrel domain. The segment at 184 to 209 (PLSKAEKERQKSEADETREAGERRKR) is disordered. The span at 187 to 209 (KAEKERQKSEADETREAGERRKR) shows a compositional bias: basic and acidic residues.

Belongs to the RimM family. As to quaternary structure, binds ribosomal protein uS19.

The protein localises to the cytoplasm. In terms of biological role, an accessory protein needed during the final step in the assembly of 30S ribosomal subunit, possibly for assembly of the head region. Essential for efficient processing of 16S rRNA. May be needed both before and after RbfA during the maturation of 16S rRNA. It has affinity for free ribosomal 30S subunits but not for 70S ribosomes. This chain is Ribosome maturation factor RimM, found in Koribacter versatilis (strain Ellin345).